The primary structure comprises 440 residues: Coenzyme A disulfide reductase (440 aa).

Position 8-33 (8-33 (GAVAGGATCASQIRRLDKDSEITIFE)) interacts with FAD. Substrate is bound by residues Thr15, Gln19, Arg22, Ser39, and Asn42. Cys43 serves as the catalytic Nucleophile. Cys43 functions as the Redox-active in the catalytic mechanism. Residue Lys71 participates in substrate binding. 151-166 (ALVVGAGYISLEVLEN) is a binding site for NADP(+). Position 267 to 277 (267 to 277 (TNIPNIYALGD)) interacts with FAD. His299 lines the substrate pocket. Tyr419 serves as a coordination point for FAD. A substrate-binding site is contributed by Lys427.

This sequence belongs to the class-III pyridine nucleotide-disulfide oxidoreductase family. Homodimer. FAD is required as a cofactor.

It catalyses the reaction NADP(+) + 2 CoA = CoA-disulfide + NADPH + H(+). Catalyzes specifically the NADPH-dependent reduction of coenzyme A disulfide. The protein is Coenzyme A disulfide reductase of Staphylococcus haemolyticus (strain JCSC1435).